Consider the following 263-residue polypeptide: 4-hydroxy-tetrahydrodipicolinate reductase (263 aa).

Position 10–15 (10–15) interacts with NAD(+); that stretch reads GASGKM. Arginine 38 contacts NADP(+). Residues 97–99 and 123–126 contribute to the NAD(+) site; these read GTT and APNF. Histidine 153 serves as the catalytic Proton donor/acceptor. Histidine 154 is a (S)-2,3,4,5-tetrahydrodipicolinate binding site. The active-site Proton donor is the lysine 157. (S)-2,3,4,5-tetrahydrodipicolinate is bound at residue 163 to 164; that stretch reads GT.

This sequence belongs to the DapB family.

The protein resides in the cytoplasm. The enzyme catalyses (S)-2,3,4,5-tetrahydrodipicolinate + NAD(+) + H2O = (2S,4S)-4-hydroxy-2,3,4,5-tetrahydrodipicolinate + NADH + H(+). The catalysed reaction is (S)-2,3,4,5-tetrahydrodipicolinate + NADP(+) + H2O = (2S,4S)-4-hydroxy-2,3,4,5-tetrahydrodipicolinate + NADPH + H(+). It functions in the pathway amino-acid biosynthesis; L-lysine biosynthesis via DAP pathway; (S)-tetrahydrodipicolinate from L-aspartate: step 4/4. Its function is as follows. Catalyzes the conversion of 4-hydroxy-tetrahydrodipicolinate (HTPA) to tetrahydrodipicolinate. This chain is 4-hydroxy-tetrahydrodipicolinate reductase, found in Dehalococcoides mccartyi (strain CBDB1).